The chain runs to 101 residues: NAD(P)H-quinone oxidoreductase subunit 4L, chloroplastic (101 aa).

The next 3 membrane-spanning stretches (helical) occupy residues 2–22, 32–52, and 61–81; these read ILEH…YGLI, MCLE…SDFF, and IFCI…LAIV.

Belongs to the complex I subunit 4L family. In terms of assembly, NDH is composed of at least 16 different subunits, 5 of which are encoded in the nucleus.

Its subcellular location is the plastid. The protein localises to the chloroplast thylakoid membrane. The catalysed reaction is a plastoquinone + NADH + (n+1) H(+)(in) = a plastoquinol + NAD(+) + n H(+)(out). The enzyme catalyses a plastoquinone + NADPH + (n+1) H(+)(in) = a plastoquinol + NADP(+) + n H(+)(out). NDH shuttles electrons from NAD(P)H:plastoquinone, via FMN and iron-sulfur (Fe-S) centers, to quinones in the photosynthetic chain and possibly in a chloroplast respiratory chain. The immediate electron acceptor for the enzyme in this species is believed to be plastoquinone. Couples the redox reaction to proton translocation, and thus conserves the redox energy in a proton gradient. In Draba nemorosa (Woodland whitlowgrass), this protein is NAD(P)H-quinone oxidoreductase subunit 4L, chloroplastic.